The chain runs to 320 residues: GPI-specific phospholipase A2-like PGAP3 (320 aa).

Positions 1–20 are cleaved as a signal peptide; the sequence is MAGLAARLVLLAGAAALASG. Residues 21-98 lie on the Lumenal side of the membrane; the sequence is SQGDREPVYR…QFHGKWPFSR (78 aa). N40 carries N-linked (GlcNAc...) asparagine glycosylation. A helical membrane pass occupies residues 99-119; the sequence is FLFFQEPASAVASFLNGLASL. Over 120–135 the chain is Cytoplasmic; the sequence is VMLCRYRTFVPASSPM. The helical transmembrane segment at 136–156 threads the bilayer; it reads YHTCVAFAWVSLNAWFWSTVF. Residues 157-169 lie on the Lumenal side of the membrane; it reads HTRDTDLTEKMDY. A helical membrane pass occupies residues 170 to 190; sequence FCASTVILHSIYLCCVRTVGL. Residues 191-193 lie on the Cytoplasmic side of the membrane; sequence QHP. The chain crosses the membrane as a helical span at residues 194–214; it reads AVVSAFRALLLLMLTVHVSYL. Residues 215 to 224 are Lumenal-facing; it reads SLIRFDYGYN. A helical membrane pass occupies residues 225-245; sequence LVANVAIGLVNVVWWLAWCLW. Topologically, residues 246–257 are cytoplasmic; sequence NQRRLPHVRKCV. Residues 258–278 traverse the membrane as a helical segment; that stretch reads VVVLLLQGLSLLELLDFPPLF. Residue W279 is a topological domain, lumenal. Residues 280–299 form a helical membrane-spanning segment; sequence VLDAHAIWHISTIPVHVLFF. Residues 300-320 lie on the Cytoplasmic side of the membrane; that stretch reads SFLEDDSLYLLKESEDKFKLD.

It belongs to the PGAP3 family. As to expression, ubiquitously expressed, with highest levels in thyroid and placenta.

The protein localises to the golgi apparatus membrane. In terms of biological role, involved in the fatty acid remodeling steps of GPI-anchor maturation where the unsaturated acyl chain at sn-2 of inositol phosphate is replaced by a saturated stearoyl chain. May catalyze the first step of the fatty acid remodeling, by removing the unsaturated acyl chain at sn-2 of inositol phosphate, generating a lyso-GPI intermediate. The fatty acid remodeling steps is critical for the integration of GPI-APs into lipid rafts. In Homo sapiens (Human), this protein is GPI-specific phospholipase A2-like PGAP3.